A 401-amino-acid chain; its full sequence is ADP-forming sulfoacetate-CoA ligase subunit SqwK (401 aa).

The ATP-grasp domain maps to 9–217 (KTVFSEHKIP…DNSVFRQPRF (209 aa)). 35-96 (KSVGFPSVVK…EEAVHIDKEI (62 aa)) contributes to the ATP binding site. E185 and N187 together coordinate Mg(2+).

Belongs to the succinate/malate CoA ligase beta subunit family. As to quaternary structure, forms a complex with SqwL. Mg(2+) is required as a cofactor.

It carries out the reaction sulfoacetate + ATP + CoA = sulfoacetyl-CoA + ADP + phosphate. In terms of biological role, part of a variant of the sulfo-TK pathway, a D-sulfoquinovose degradation pathway that produces sulfoacetate. Hydrolyzes sulfoacetyl-coenzyme A (sulfoacetyl-CoA) to produce sulfoacetate and CoA coupled with the phosphorylation of ADP to generate ATP. Cannot use succinate, acetate or 3-hydroxypropionate, and shows only residual activities with malonate and 3-sulfopropanoate. The chain is ADP-forming sulfoacetate-CoA ligase subunit SqwK from Acholeplasma sp.